A 218-amino-acid polypeptide reads, in one-letter code: MGQKINPLGFRLGTTQSHDSIWFAQPTNYSENLKEDKKIRDCIKTYIQKTIKISSGVEGIGRIKIQKRIDLIQVIIYMGFPKLLIDGKPRRIEELQINVQKKMNYVNRKLNIAITRIANAYRDPNILAEFIAGQLKNRVSFRKAMKKAIELTEQAGTKGVQVQIAGRIDGKEIARVEWIREGRVPLQTIRAKIDYCSYTVRTIYGVLGIKVWIFLNKE.

A KH type-2 domain is found at 47–118 (IQKTIKISSG…KLNIAITRIA (72 aa)).

Belongs to the universal ribosomal protein uS3 family. Part of the 30S ribosomal subunit.

It is found in the plastid. The protein resides in the chloroplast. This is Small ribosomal subunit protein uS3c (rps3) from Lotus japonicus (Lotus corniculatus var. japonicus).